We begin with the raw amino-acid sequence, 299 residues long: Bifunctional phosphoglucose/phosphomannose isomerase (299 aa).

In terms of domain architecture, SIS spans 27 to 177; that stretch reads DEVEITPSSR…IHKLMEDFQK (151 aa). 6 residues coordinate D-fructose 6-phosphate: G44, S45, S84, S86, T89, and R132. Catalysis depends on E200, which acts as the Proton acceptor. The D-fructose 6-phosphate site is built by H216 and K295. Catalysis depends on H216, which acts as the Proton donor. The Proton acceptor role is filled by K295.

It belongs to the PGI/PMI family. In terms of assembly, homodimer.

The catalysed reaction is alpha-D-glucose 6-phosphate = beta-D-fructose 6-phosphate. The enzyme catalyses D-mannose 6-phosphate = D-fructose 6-phosphate. Presence or absence of metal ions or EDTA does not significantly affect the phosphoglucose isomerase activity. In terms of biological role, dual specificity isomerase that catalyzes the isomerization of both glucose-6-phosphate and mannose-6-phosphate to fructose-6-phosphate with nearly similar catalytic efficiency. Also catalyzes the epimerization of mannose 6-phosphate to glucose 6-phosphate but the rate of epimerization reaction is 20-fold lower than that of isomerization reaction. This chain is Bifunctional phosphoglucose/phosphomannose isomerase, found in Pyrobaculum calidifontis (strain DSM 21063 / JCM 11548 / VA1).